Reading from the N-terminus, the 422-residue chain is Imidazolonepropionase (422 aa).

His-82 and His-84 together coordinate Fe(3+). His-82 and His-84 together coordinate Zn(2+). 4-imidazolone-5-propanoate is bound by residues Arg-91, Tyr-154, and His-187. Tyr-154 is an N-formimidoyl-L-glutamate binding site. Position 252 (His-252) interacts with Fe(3+). His-252 contributes to the Zn(2+) binding site. A 4-imidazolone-5-propanoate-binding site is contributed by Glu-255. Residue Asp-327 coordinates Fe(3+). Asp-327 is a Zn(2+) binding site. Asn-329 and Gly-331 together coordinate N-formimidoyl-L-glutamate. Ser-332 provides a ligand contact to 4-imidazolone-5-propanoate.

The protein belongs to the metallo-dependent hydrolases superfamily. HutI family. Zn(2+) serves as cofactor. It depends on Fe(3+) as a cofactor.

It localises to the cytoplasm. It carries out the reaction 4-imidazolone-5-propanoate + H2O = N-formimidoyl-L-glutamate. It participates in amino-acid degradation; L-histidine degradation into L-glutamate; N-formimidoyl-L-glutamate from L-histidine: step 3/3. In terms of biological role, catalyzes the hydrolytic cleavage of the carbon-nitrogen bond in imidazolone-5-propanoate to yield N-formimidoyl-L-glutamate. It is the third step in the universal histidine degradation pathway. The chain is Imidazolonepropionase from Alkaliphilus oremlandii (strain OhILAs) (Clostridium oremlandii (strain OhILAs)).